Here is a 475-residue protein sequence, read N- to C-terminus: Aspartyl/glutamyl-tRNA(Asn/Gln) amidotransferase subunit B (475 aa).

This sequence belongs to the GatB/GatE family. GatB subfamily. Heterotrimer of A, B and C subunits.

It catalyses the reaction L-glutamyl-tRNA(Gln) + L-glutamine + ATP + H2O = L-glutaminyl-tRNA(Gln) + L-glutamate + ADP + phosphate + H(+). The enzyme catalyses L-aspartyl-tRNA(Asn) + L-glutamine + ATP + H2O = L-asparaginyl-tRNA(Asn) + L-glutamate + ADP + phosphate + 2 H(+). Functionally, allows the formation of correctly charged Asn-tRNA(Asn) or Gln-tRNA(Gln) through the transamidation of misacylated Asp-tRNA(Asn) or Glu-tRNA(Gln) in organisms which lack either or both of asparaginyl-tRNA or glutaminyl-tRNA synthetases. The reaction takes place in the presence of glutamine and ATP through an activated phospho-Asp-tRNA(Asn) or phospho-Glu-tRNA(Gln). This is Aspartyl/glutamyl-tRNA(Asn/Gln) amidotransferase subunit B from Chlorobium luteolum (strain DSM 273 / BCRC 81028 / 2530) (Pelodictyon luteolum).